Consider the following 60-residue polypeptide: Large ribosomal subunit protein bL32 (60 aa).

It belongs to the bacterial ribosomal protein bL32 family.

This chain is Large ribosomal subunit protein bL32, found in Borrelia hermsii (strain HS1 / DAH).